Reading from the N-terminus, the 835-residue chain is Ribosome-releasing factor 2, mitochondrial (835 aa).

A mitochondrion-targeting transit peptide spans 1 to 50 (MPWCNTRLRTCGASPKIFLRRVRCPVLLHNWTIGRVSSVSKMILRFLRSY). One can recognise a tr-type G domain in the interval 57–343 (TRVRNIGIIA…AVVDYLPSPA (287 aa)). Residues 66-73 (AHIDAGKT), 131-135 (DTPGH), and 183-186 (NKMD) contribute to the GTP site.

It belongs to the TRAFAC class translation factor GTPase superfamily. Classic translation factor GTPase family. EF-G/EF-2 subfamily.

It is found in the mitochondrion. Functionally, mitochondrial GTPase that mediates the disassembly of ribosomes from messenger RNA at the termination of mitochondrial protein biosynthesis. Not involved in the GTP-dependent ribosomal translocation step during translation elongation. The protein is Ribosome-releasing factor 2, mitochondrial of Eremothecium gossypii (strain ATCC 10895 / CBS 109.51 / FGSC 9923 / NRRL Y-1056) (Yeast).